The following is a 250-amino-acid chain: Flavin-dependent thymidylate synthase (250 aa).

Residues 7-233 enclose the ThyX domain; that stretch reads LSVELIACSS…PTVFGDFEIE (227 aa). DUMP-binding positions include 92-95, 103-107, and Arg172; these read ELVR and QLSQR. Residues 95–97 and Gln103 each bind FAD; that span reads RHR. The ThyX motif signature appears at 95 to 105; sequence RHRHFSFSQLS. FAD contacts are provided by residues 188–190 and His194; that span reads NFR. Arg199 provides a ligand contact to dUMP. The active-site Involved in ionization of N3 of dUMP, leading to its activation is Arg199.

Belongs to the thymidylate synthase ThyX family. Homotetramer. FAD is required as a cofactor.

It carries out the reaction dUMP + (6R)-5,10-methylene-5,6,7,8-tetrahydrofolate + NADPH + H(+) = dTMP + (6S)-5,6,7,8-tetrahydrofolate + NADP(+). The protein operates within pyrimidine metabolism; dTTP biosynthesis. Its function is as follows. Catalyzes the reductive methylation of 2'-deoxyuridine-5'-monophosphate (dUMP) to 2'-deoxythymidine-5'-monophosphate (dTMP) while utilizing 5,10-methylenetetrahydrofolate (mTHF) as the methyl donor, and NADPH and FADH(2) as the reductant. The sequence is that of Flavin-dependent thymidylate synthase from Corynebacterium glutamicum (strain ATCC 13032 / DSM 20300 / JCM 1318 / BCRC 11384 / CCUG 27702 / LMG 3730 / NBRC 12168 / NCIMB 10025 / NRRL B-2784 / 534).